The following is a 258-amino-acid chain: Small ribosomal subunit protein uS3 (258 aa).

The KH type-2 domain occupies 16–85; sequence IDEYLEKELE…NPQVEVKEVD (70 aa). Residues 198-258 form a disordered region; the sequence is RVTETPAEEA…KDADGEESEK (61 aa). Residues 203-245 show a composition bias toward acidic residues; that stretch reads PAEEASEASEVVEDLEEVEDLEEIEDLEEVEDLEEVEDLEDTE.

It belongs to the universal ribosomal protein uS3 family. Part of the 30S ribosomal subunit.

Functionally, binds the lower part of the 30S subunit head. This Methanothermobacter thermautotrophicus (strain ATCC 29096 / DSM 1053 / JCM 10044 / NBRC 100330 / Delta H) (Methanobacterium thermoautotrophicum) protein is Small ribosomal subunit protein uS3.